Consider the following 130-residue polypeptide: MANEFNYGTGRRKTATARTRLYAGSGQIVVNGRPFEDYFPRKSLQMIIRQPLVLTKNVERFDIKVNVCGGGVTGQAEAVRHGISRALLELEPELRGALKRAGFLTRDARKKERKKYGQRAARARYQYSKR.

The interval 109-130 is disordered; that stretch reads RKKERKKYGQRAARARYQYSKR.

Belongs to the universal ribosomal protein uS9 family.

The sequence is that of Small ribosomal subunit protein uS9 from Nitratidesulfovibrio vulgaris (strain DSM 19637 / Miyazaki F) (Desulfovibrio vulgaris).